The following is a 703-amino-acid chain: Subtilisin-like protease SBT4.7 (703 aa).

An N-terminal signal peptide occupies residues 1 to 19 (MAKRDYFCFVVLFLSSVSA). Residues 20-107 (VIDDPQNKQV…VFPNINYKLQ (88 aa)) constitute a propeptide, activation peptide. The region spanning 29–106 (VYVVYMGSLP…SVFPNINYKL (78 aa)) is the Inhibitor I9 domain. A Peptidase S8 domain is found at 111–556 (SWDFLGLKEG…AGHVDQIAAI (446 aa)). Asp139 functions as the Charge relay system in the catalytic mechanism. Asn170 is a glycosylation site (N-linked (GlcNAc...) asparagine). The active-site Charge relay system is His194. Residues Asn217, Asn360, Asn416, and Asn433 are each glycosylated (N-linked (GlcNAc...) asparagine). The PA domain maps to 350-411 (KYPLVYGDNF…LLPPDDFDSL (62 aa)). The Charge relay system role is filled by Ser495. Residues Asn577, Asn615, and Asn633 are each glycosylated (N-linked (GlcNAc...) asparagine).

It belongs to the peptidase S8 family. In terms of processing, the C-terminal propeptide is autocleaved.

Its subcellular location is the secreted. The chain is Subtilisin-like protease SBT4.7 from Arabidopsis thaliana (Mouse-ear cress).